Consider the following 336-residue polypeptide: Biotin synthase (336 aa).

Residues 54–281 (NAIQLSTLLS…KAMVRLSAGR (228 aa)) form the Radical SAM core domain. [4Fe-4S] cluster contacts are provided by Cys-69, Cys-73, and Cys-76. [2Fe-2S] cluster contacts are provided by Cys-113, Cys-144, Cys-204, and Arg-276.

The protein belongs to the radical SAM superfamily. Biotin synthase family. Homodimer. [4Fe-4S] cluster serves as cofactor. The cofactor is [2Fe-2S] cluster.

The enzyme catalyses (4R,5S)-dethiobiotin + (sulfur carrier)-SH + 2 reduced [2Fe-2S]-[ferredoxin] + 2 S-adenosyl-L-methionine = (sulfur carrier)-H + biotin + 2 5'-deoxyadenosine + 2 L-methionine + 2 oxidized [2Fe-2S]-[ferredoxin]. It participates in cofactor biosynthesis; biotin biosynthesis; biotin from 7,8-diaminononanoate: step 2/2. Catalyzes the conversion of dethiobiotin (DTB) to biotin by the insertion of a sulfur atom into dethiobiotin via a radical-based mechanism. The protein is Biotin synthase of Burkholderia pseudomallei (strain 1710b).